We begin with the raw amino-acid sequence, 200 residues long: Methyl-coenzyme M reductase I operon protein C (200 aa).

As to quaternary structure, MCR is composed of three subunits: alpha, beta, and gamma. The function of proteins C and D is not known.

The polypeptide is Methyl-coenzyme M reductase I operon protein C (mcrC) (Methanocaldococcus jannaschii (strain ATCC 43067 / DSM 2661 / JAL-1 / JCM 10045 / NBRC 100440) (Methanococcus jannaschii)).